Reading from the N-terminus, the 250-residue chain is Leucyl/phenylalanyl-tRNA--protein transferase (250 aa).

Belongs to the L/F-transferase family.

The protein localises to the cytoplasm. It carries out the reaction N-terminal L-lysyl-[protein] + L-leucyl-tRNA(Leu) = N-terminal L-leucyl-L-lysyl-[protein] + tRNA(Leu) + H(+). The enzyme catalyses N-terminal L-arginyl-[protein] + L-leucyl-tRNA(Leu) = N-terminal L-leucyl-L-arginyl-[protein] + tRNA(Leu) + H(+). It catalyses the reaction L-phenylalanyl-tRNA(Phe) + an N-terminal L-alpha-aminoacyl-[protein] = an N-terminal L-phenylalanyl-L-alpha-aminoacyl-[protein] + tRNA(Phe). Its function is as follows. Functions in the N-end rule pathway of protein degradation where it conjugates Leu, Phe and, less efficiently, Met from aminoacyl-tRNAs to the N-termini of proteins containing an N-terminal arginine or lysine. This chain is Leucyl/phenylalanyl-tRNA--protein transferase, found in Cupriavidus taiwanensis (strain DSM 17343 / BCRC 17206 / CCUG 44338 / CIP 107171 / LMG 19424 / R1) (Ralstonia taiwanensis (strain LMG 19424)).